The following is a 103-amino-acid chain: Large ribosomal subunit protein eL14 (103 aa).

The protein belongs to the eukaryotic ribosomal protein eL14 family.

This Pyrobaculum arsenaticum (strain DSM 13514 / JCM 11321 / PZ6) protein is Large ribosomal subunit protein eL14.